We begin with the raw amino-acid sequence, 152 residues long: MGLSNKFKSFFFLDEEEEYYEEEVAREPEPMQKKTKKEKPSKNRFYAVEEEDAKVVSMQGAQFSSRMVLAEPRVYAEAQELADYLKDYKTVVVNLQRISHDQATRIVDFLSGTVYALGGDIQRVGNNIFLCTPDNVEVNGSISEMLDEQNFM.

Residues 23–32 (EVAREPEPMQ) are compositionally biased toward basic and acidic residues. Positions 23-42 (EVAREPEPMQKKTKKEKPSK) are disordered.

It belongs to the SepF family. Homodimer. Interacts with FtsZ.

It is found in the cytoplasm. Its function is as follows. Cell division protein that is part of the divisome complex and is recruited early to the Z-ring. Probably stimulates Z-ring formation, perhaps through the cross-linking of FtsZ protofilaments. Its function overlaps with FtsA. This chain is Cell division protein SepF, found in Listeria innocua serovar 6a (strain ATCC BAA-680 / CLIP 11262).